The chain runs to 670 residues: Probable ATP-citrate synthase subunit 1 (670 aa).

The interval 1-22 is disordered; sequence MPSATTASTNGANGASASPAPG. ATP is bound by residues 257–277 and 308–334; these read LLRYQADPDCKILVLLGEVGG and FKTEVQFGHAGAFANSQLETAATKNKS. Residue E274 participates in Mg(2+) binding. The Tele-phosphohistidine intermediate role is filled by H316. 335-345 is a binding site for CoA; that stretch reads MREAGFYVPDT.

This sequence belongs to the succinate/malate CoA ligase alpha subunit family. In terms of assembly, composed of two subunits.

It localises to the cytoplasm. The enzyme catalyses oxaloacetate + acetyl-CoA + ADP + phosphate = citrate + ATP + CoA. Catalyzes the formation of cytosolic acetyl-CoA, which is mainly used for the biosynthesis of fatty acids and sterols. The sequence is that of Probable ATP-citrate synthase subunit 1 from Neurospora crassa (strain ATCC 24698 / 74-OR23-1A / CBS 708.71 / DSM 1257 / FGSC 987).